We begin with the raw amino-acid sequence, 144 residues long: uncharacterized protein (144 aa).

The first 23 residues, Met-1–Tyr-23, serve as a signal peptide directing secretion.

This is an uncharacterized protein from Archaeoglobus fulgidus (strain ATCC 49558 / DSM 4304 / JCM 9628 / NBRC 100126 / VC-16).